The sequence spans 920 residues: Phosphoenolpyruvate carboxylase (920 aa).

Residues histidine 138 and lysine 583 contribute to the active site.

Belongs to the PEPCase type 1 family. Mg(2+) is required as a cofactor.

The catalysed reaction is oxaloacetate + phosphate = phosphoenolpyruvate + hydrogencarbonate. In terms of biological role, forms oxaloacetate, a four-carbon dicarboxylic acid source for the tricarboxylic acid cycle. In Streptococcus pyogenes serotype M5 (strain Manfredo), this protein is Phosphoenolpyruvate carboxylase.